We begin with the raw amino-acid sequence, 693 residues long: Elongation factor G (693 aa).

The 281-residue stretch at K6–I286 folds into the tr-type G domain. Residues A15 to T22, D83 to H87, and N137 to D140 contribute to the GTP site.

It belongs to the TRAFAC class translation factor GTPase superfamily. Classic translation factor GTPase family. EF-G/EF-2 subfamily.

It localises to the cytoplasm. In terms of biological role, catalyzes the GTP-dependent ribosomal translocation step during translation elongation. During this step, the ribosome changes from the pre-translocational (PRE) to the post-translocational (POST) state as the newly formed A-site-bound peptidyl-tRNA and P-site-bound deacylated tRNA move to the P and E sites, respectively. Catalyzes the coordinated movement of the two tRNA molecules, the mRNA and conformational changes in the ribosome. The sequence is that of Elongation factor G from Karelsulcia muelleri (strain GWSS) (Sulcia muelleri).